We begin with the raw amino-acid sequence, 305 residues long: Sulfate adenylyltransferase subunit 2 (305 aa).

Belongs to the PAPS reductase family. CysD subfamily. Heterodimer composed of CysD, the smaller subunit, and CysN.

The catalysed reaction is sulfate + ATP + H(+) = adenosine 5'-phosphosulfate + diphosphate. It functions in the pathway sulfur metabolism; hydrogen sulfide biosynthesis; sulfite from sulfate: step 1/3. With CysN forms the ATP sulfurylase (ATPS) that catalyzes the adenylation of sulfate producing adenosine 5'-phosphosulfate (APS) and diphosphate, the first enzymatic step in sulfur assimilation pathway. APS synthesis involves the formation of a high-energy phosphoric-sulfuric acid anhydride bond driven by GTP hydrolysis by CysN coupled to ATP hydrolysis by CysD. The sequence is that of Sulfate adenylyltransferase subunit 2 from Pseudomonas fluorescens (strain SBW25).